Consider the following 308-residue polypeptide: Glutathione synthetase (308 aa).

Residues 117-300 (KLLPLSFPKF…LERDCWDYFE (184 aa)) form the ATP-grasp domain. An ATP-binding site is contributed by 143-198 (YAEYGDIVLKPLYDYGGNGVCRICGRADVGAISSAMVERYEAPLVAQQFIDDISSD). Residues Glu-271 and Asn-273 each coordinate Mg(2+).

This sequence belongs to the prokaryotic GSH synthase family. Requires Mg(2+) as cofactor. Mn(2+) serves as cofactor.

It catalyses the reaction gamma-L-glutamyl-L-cysteine + glycine + ATP = glutathione + ADP + phosphate + H(+). It participates in sulfur metabolism; glutathione biosynthesis; glutathione from L-cysteine and L-glutamate: step 2/2. This is Glutathione synthetase from Anaplasma centrale.